We begin with the raw amino-acid sequence, 216 residues long: MKIFLDTANLDEIRRGVEWGVVDGVTTNPTLISKEGKPFEETIKEICNIVQGPISAEVISLNFEGMIDEARNLAKIDENIVIKIPMTPNGIKAVKVLSKEGIKTNVTLIFSPNQALLAAKAGATYVSPFVGRVDDLANDGLKIVEEIMQIYENYGFETEVIVASVRHPMHVLEAALIGADIATVPFSVLEKMFKHPMTDIGIERFLKDWEKYKTGR.

Catalysis depends on Lys83, which acts as the Schiff-base intermediate with substrate.

The protein belongs to the transaldolase family. Type 3B subfamily.

It is found in the cytoplasm. The enzyme catalyses D-sedoheptulose 7-phosphate + D-glyceraldehyde 3-phosphate = D-erythrose 4-phosphate + beta-D-fructose 6-phosphate. It participates in carbohydrate degradation; pentose phosphate pathway; D-glyceraldehyde 3-phosphate and beta-D-fructose 6-phosphate from D-ribose 5-phosphate and D-xylulose 5-phosphate (non-oxidative stage): step 2/3. Its function is as follows. Transaldolase is important for the balance of metabolites in the pentose-phosphate pathway. This chain is Probable transaldolase, found in Thermosipho africanus (strain TCF52B).